Reading from the N-terminus, the 77-residue chain is Probable small nuclear ribonucleoprotein G (77 aa).

Positions 4 to 76 constitute a Sm domain; sequence THPPELKKYM…VVIMEPKERI (73 aa).

It belongs to the snRNP Sm proteins family. Core component of the spliceosomal U1, U2, U4 and U5 small nuclear ribonucleoproteins (snRNPs), the building blocks of the spliceosome.

The protein localises to the cytoplasm. It is found in the cytosol. Its subcellular location is the nucleus. In terms of biological role, plays a role in pre-mRNA splicing as a core component of the spliceosomal U1, U2, U4 and U5 small nuclear ribonucleoproteins (snRNPs), the building blocks of the spliceosome. This Caenorhabditis elegans protein is Probable small nuclear ribonucleoprotein G (snr-7).